The chain runs to 78 residues: Small ribosomal subunit protein uS17 (78 aa).

This sequence belongs to the universal ribosomal protein uS17 family. As to quaternary structure, part of the 30S ribosomal subunit.

In terms of biological role, one of the primary rRNA binding proteins, it binds specifically to the 5'-end of 16S ribosomal RNA. The sequence is that of Small ribosomal subunit protein uS17 from Wolbachia pipientis wMel.